A 419-amino-acid chain; its full sequence is Endochitinase 2 (419 aa).

Residues 1-18 (MHHLRALVGVGLAGLAAG) form the signal peptide. In terms of domain architecture, GH18 spans 35–343 (AQNVVYWGQN…QQAKSILVNG (309 aa)). The N-linked (GlcNAc...) asparagine glycan is linked to asparagine 153. Glutamate 173 serves as the catalytic Proton donor. 2 N-linked (GlcNAc...) asparagine glycosylation sites follow: asparagine 237 and asparagine 256. Positions 350–381 (GPPSSTPATAPAPTATTMPSSTSVSSPAASPT) are enriched in low complexity. A disordered region spans residues 350–386 (GPPSSTPATAPAPTATTMPSSTSVSSPAASPTGGTVP). A CBM1 domain is found at 383–419 (GTVPQWGQCGGEGYSGPTQCVAPYQCVKQGDWWSSCR).

It belongs to the glycosyl hydrolase 18 family. Chitinase class III subfamily.

It localises to the secreted. It catalyses the reaction Random endo-hydrolysis of N-acetyl-beta-D-glucosaminide (1-&gt;4)-beta-linkages in chitin and chitodextrins.. In terms of biological role, secreted chitinase involved in the degradation of chitin, a component of the cell walls of fungi and exoskeletal elements of some animals (including worms and arthropods). Participates in the infection process and directly acts in the penetration process of the host cuticle. The polypeptide is Endochitinase 2 (chi2) (Metarhizium robertsii (strain ARSEF 23 / ATCC MYA-3075) (Metarhizium anisopliae (strain ARSEF 23))).